Consider the following 627-residue polypeptide: Protein CER1-like 1 (627 aa).

The next 5 helical transmembrane spans lie at 19–39 (FKYLLVAPLVMASMHSYVTAV), 48–68 (LMIVVLMLWRIVHSQIWISVS), 126–146 (GAILMALLHAGPVEFLYYWFH), 186–206 (LLFAIPMVTASLCGILSIVSI), and 328–348 (YLTCFMWPFTLLCSFALTSAI). Positions 138-272 (VEFLYYWFHR…MPIYDFIYGT (135 aa)) constitute a Fatty acid hydroxylase domain.

The protein belongs to the sterol desaturase family. Expressed in flowers and siliques. Not detected in pollen, pedicels and seeds.

It localises to the membrane. The chain is Protein CER1-like 1 from Arabidopsis thaliana (Mouse-ear cress).